A 377-amino-acid polypeptide reads, in one-letter code: Lipoyl synthase, mitochondrial (377 aa).

The transit peptide at 1-77 (MFRRGGRILN…LPNGSVHKRL (77 aa)) directs the protein to the mitochondrion. Residues Cys-107, Cys-112, Cys-118, Cys-138, Cys-142, Cys-145, and Ser-353 each coordinate [4Fe-4S] cluster. Positions 123 to 342 (DKTRATATIM…RKRAEELGFL (220 aa)) constitute a Radical SAM core domain.

It belongs to the radical SAM superfamily. Lipoyl synthase family. The cofactor is [4Fe-4S] cluster.

The protein localises to the mitochondrion. It catalyses the reaction [[Fe-S] cluster scaffold protein carrying a second [4Fe-4S](2+) cluster] + N(6)-octanoyl-L-lysyl-[protein] + 2 oxidized [2Fe-2S]-[ferredoxin] + 2 S-adenosyl-L-methionine + 4 H(+) = [[Fe-S] cluster scaffold protein] + N(6)-[(R)-dihydrolipoyl]-L-lysyl-[protein] + 4 Fe(3+) + 2 hydrogen sulfide + 2 5'-deoxyadenosine + 2 L-methionine + 2 reduced [2Fe-2S]-[ferredoxin]. The protein operates within protein modification; protein lipoylation via endogenous pathway; protein N(6)-(lipoyl)lysine from octanoyl-[acyl-carrier-protein]: step 2/2. Functionally, catalyzes the radical-mediated insertion of two sulfur atoms into the C-6 and C-8 positions of the octanoyl moiety bound to the lipoyl domains of lipoate-dependent enzymes, thereby converting the octanoylated domains into lipoylated derivatives. This chain is Lipoyl synthase, mitochondrial, found in Schizosaccharomyces japonicus (strain yFS275 / FY16936) (Fission yeast).